Consider the following 263-residue polypeptide: Polyamine aminopropyltransferase (263 aa).

A PABS domain is found at 1-221; it reads MARHPYRRLR…AVMAFQSSPK (221 aa). S-methyl-5'-thioadenosine-binding positions include aspartate 98 and 126-127; that span reads DG. Aspartate 144 (proton acceptor) is an active-site residue.

This sequence belongs to the spermidine/spermine synthase family. In terms of assembly, homodimer or homotetramer.

It is found in the cytoplasm. The enzyme catalyses S-adenosyl 3-(methylsulfanyl)propylamine + putrescine = S-methyl-5'-thioadenosine + spermidine + H(+). It functions in the pathway amine and polyamine biosynthesis; spermidine biosynthesis; spermidine from putrescine: step 1/1. Catalyzes the irreversible transfer of a propylamine group from the amino donor S-adenosylmethioninamine (decarboxy-AdoMet) to putrescine (1,4-diaminobutane) to yield spermidine. The protein is Polyamine aminopropyltransferase of Neisseria meningitidis serogroup A / serotype 4A (strain DSM 15465 / Z2491).